A 357-amino-acid chain; its full sequence is Trans-enoyl reductase buaC (357 aa).

Position 50-53 (50-53) interacts with NADP(+); that stretch reads VDTK. 135 to 142 is a binding site for substrate; it reads TALVSACM. NADP(+)-binding positions include 170–173, 193–196, Tyr211, and 258–259; these read STAT, SPKN, and LN. 278-282 is a substrate binding site; sequence ATLIT. 347–348 contacts NADP(+); sequence IS.

It belongs to the zinc-containing alcohol dehydrogenase family. As to quaternary structure, monomer.

It participates in mycotoxin biosynthesis. Its function is as follows. Trans-enoyl reductase; part of the gene cluster that mediates the biosynthesis of burnettramic acids, an unusual class of bolaamphiphilic pyrrolizidinediones that display potent antibacterial, antifungal, and cytotoxic activities. The first step of the biosynthesis of burnettramic acids is the hydroxylation of proline by the proline hydroxylase buaE to generate 4-hydroxyproline. The PKS-NRPS buaA and trans-enoyl reductase buaC construct the highly reduced polyketide chain, and the condensation (C) domain of buaA then catalyzes the amide bond formation with the activated 4-hydroxyproline. This is followed by the R domain releasing the nascent polyketide-peptide directly via a Dieckmann condensation to afford a tetramic acid fused to the hydroxyproline, generating the bicyclic pyrrolidinedione moiety. The cytochrome P450 monooxygenases buaD and buaG are likely responsible for the multiple hydroxylations on the polyketide chain and its terminus, although in the heterologous context, buaD does not appear to be required. Therefore, while buaG may be a multifunctional cytochrome P450 monooxygenase, it cannot be ruled out that the two secondary alcohols on the polyketide chain could have an acetate origin. Finally, the glycosyltransferase buaB transfers beta-D-mannose to the aglycone burnettramic acid A to form burnettramic acid A. Burnettramic acid B is a minor cis-pyrrolizidine epimer of burnettramic acid A and it is likely that small amounts of it form naturally in acidic environments. This is Trans-enoyl reductase buaC from Petromyces alliaceus (Aspergillus alliaceus).